The chain runs to 234 residues: GTP cyclohydrolase 1 (234 aa).

A disordered region spans residues 1 to 26 (MDALIKPLRAGKPDAKPADPKGTEFR). The span at 11 to 26 (GKPDAKPADPKGTEFR) shows a compositional bias: basic and acidic residues. Residues Cys123, His126, and Cys194 each contribute to the Zn(2+) site.

Belongs to the GTP cyclohydrolase I family. As to quaternary structure, toroid-shaped homodecamer, composed of two pentamers of five dimers.

It catalyses the reaction GTP + H2O = 7,8-dihydroneopterin 3'-triphosphate + formate + H(+). The protein operates within cofactor biosynthesis; 7,8-dihydroneopterin triphosphate biosynthesis; 7,8-dihydroneopterin triphosphate from GTP: step 1/1. In Rhodopseudomonas palustris (strain BisB18), this protein is GTP cyclohydrolase 1.